We begin with the raw amino-acid sequence, 154 residues long: MPVEVSTIDRKWYRIIRKPKATSQEIVLFALRELKVDRYNPIVSVVLAHDALLLELNHKYRNINKPTNVLSFNYEALSHNCCLGEIFLSIDRLTYESKTLGVEVHAHFTHMLIHGVLHILGYDHEVPEDAQEMQALEIDLLSKRSIENPYLIQE.

Positions 114, 118, and 124 each coordinate Zn(2+).

This sequence belongs to the endoribonuclease YbeY family. The cofactor is Zn(2+).

It localises to the cytoplasm. Its function is as follows. Single strand-specific metallo-endoribonuclease involved in late-stage 70S ribosome quality control and in maturation of the 3' terminus of the 16S rRNA. This is Endoribonuclease YbeY from Anaplasma phagocytophilum (strain HZ).